The sequence spans 387 residues: MEELQDVQLTEIKPLLTDKGSGQHFEDFDGQEHNIETAFGVVHVTMSGNARGNRPVLLTFHDIGLNHKSCFNSFFNFDDMHEITQHFAVCHIDAPGQQEGAPSFPTGYQYPTMDELAEMLCAVLTHLNLRSIIGIGVGAGAYVLSRFALNNPLLVEGLVLINIDPCAKGWIDWAASKLSFWTSNIVEIVLGQLFGDEELQSNLDLVQTYRLHIAQDINQDNLQLFVTSYNSRKDLEIERPIFGSSTPTNTIKCPVLLVVGDSSPAVDAVVECNSRLDPTRTTLLKMADCGGLPQAVQPGKLTEAIKYFVQGMGYIPHVQLSHLSTESVPSASMTRLVRSRTHSASSSGSMEMPRSRSHTSNAQLQSTSNNSLSNQIQETPHTIELSC.

Residues 329–387 (PSASMTRLVRSRTHSASSSGSMEMPRSRSHTSNAQLQSTSNNSLSNQIQETPHTIELSC) are disordered. A compositionally biased stretch (low complexity) spans 359–377 (TSNAQLQSTSNNSLSNQIQ).

The protein belongs to the NDRG family.

The protein is Protein NDRG3 of Xenopus tropicalis (Western clawed frog).